The chain runs to 514 residues: 1-pyrroline-5-carboxylate dehydrogenase (514 aa).

Catalysis depends on residues Glu-286 and Cys-320.

This sequence belongs to the aldehyde dehydrogenase family. RocA subfamily.

It catalyses the reaction L-glutamate 5-semialdehyde + NAD(+) + H2O = L-glutamate + NADH + 2 H(+). It participates in amino-acid degradation; L-proline degradation into L-glutamate; L-glutamate from L-proline: step 2/2. This is 1-pyrroline-5-carboxylate dehydrogenase from Staphylococcus aureus (strain MW2).